The chain runs to 86 residues: UPF0386 protein RC1_1783 (86 aa).

Belongs to the UPF0386 family.

The protein is UPF0386 protein RC1_1783 of Rhodospirillum centenum (strain ATCC 51521 / SW).